We begin with the raw amino-acid sequence, 99 residues long: Bombyxin A-1 homolog (99 aa).

The N-terminal stretch at 1–19 is a signal peptide; sequence MKTQVLFLVFALAAVMVSG. Disulfide bonds link Cys27–Cys86, Cys39–Cys99, and Cys85–Cys90. A propeptide spans 48-76 (c peptide like); the sequence is TPYISPENEGYGWRWLEPQRARQLDGARG.

Belongs to the insulin family. As to quaternary structure, heterodimer of a B chain and an A chain linked by two disulfide bonds.

It localises to the secreted. In terms of biological role, brain peptide responsible for activation of prothoracic glands to produce ecdysone in insects. The chain is Bombyxin A-1 homolog (SBXA1) from Samia cynthia (Ailanthus silkmoth).